The primary structure comprises 200 residues: Probable GTP-binding protein EngB (200 aa).

In terms of domain architecture, EngB-type G spans 22-195 (GKDEIAFVGR…INNICSGINY (174 aa)). Residues 30-37 (GRSNVGKS), 57-61 (GKTRL), 75-78 (DLPG), 142-145 (TKSD), and 174-176 (FSS) each bind GTP. Residues S37 and T59 each coordinate Mg(2+).

Belongs to the TRAFAC class TrmE-Era-EngA-EngB-Septin-like GTPase superfamily. EngB GTPase family. Mg(2+) is required as a cofactor.

In terms of biological role, necessary for normal cell division and for the maintenance of normal septation. This chain is Probable GTP-binding protein EngB, found in Clostridium acetobutylicum (strain ATCC 824 / DSM 792 / JCM 1419 / IAM 19013 / LMG 5710 / NBRC 13948 / NRRL B-527 / VKM B-1787 / 2291 / W).